We begin with the raw amino-acid sequence, 251 residues long: Putative F-box protein PP2-B12 (251 aa).

One can recognise an F-box domain in the interval methionine 1 to phenylalanine 46.

This is Putative F-box protein PP2-B12 (PP2B12) from Arabidopsis thaliana (Mouse-ear cress).